Here is a 118-residue protein sequence, read N- to C-terminus: DNA-binding protein MmarC6_0793 (118 aa).

Basic and acidic residues predominate over residues 1–12; that stretch reads MNPEEIRQRRLQ. Positions 1–33 are disordered; sequence MNPEEIRQRRLQEMQAKAQEQGAQDPEAQRQMQ. The span at 24–33 shows a compositional bias: low complexity; that stretch reads QDPEAQRQMQ.

This sequence belongs to the PDCD5 family.

In Methanococcus maripaludis (strain C6 / ATCC BAA-1332), this protein is DNA-binding protein MmarC6_0793.